A 229-amino-acid chain; its full sequence is Large ribosomal subunit protein uL1 (229 aa).

Belongs to the universal ribosomal protein uL1 family. In terms of assembly, part of the 50S ribosomal subunit.

Binds directly to 23S rRNA. The L1 stalk is quite mobile in the ribosome, and is involved in E site tRNA release. Its function is as follows. Protein L1 is also a translational repressor protein, it controls the translation of the L11 operon by binding to its mRNA. The sequence is that of Large ribosomal subunit protein uL1 from Clostridium perfringens (strain ATCC 13124 / DSM 756 / JCM 1290 / NCIMB 6125 / NCTC 8237 / Type A).